The following is a 430-amino-acid chain: Serine hydroxymethyltransferase (430 aa).

Residue 120 to 122 (GHI) participates in (6S)-5,6,7,8-tetrahydrofolate binding. Position 226 is an N6-(pyridoxal phosphate)lysine (Lys226).

Belongs to the SHMT family. In terms of assembly, homodimer. Requires pyridoxal 5'-phosphate as cofactor.

It localises to the cytoplasm. The protein operates within amino-acid biosynthesis; glycine biosynthesis; glycine from L-serine: step 1/1. Catalyzes the reversible interconversion of serine and glycine with a modified folate serving as the one-carbon carrier. Also exhibits a pteridine-independent aldolase activity toward beta-hydroxyamino acids, producing glycine and aldehydes, via a retro-aldol mechanism. This chain is Serine hydroxymethyltransferase, found in Pyrobaculum calidifontis (strain DSM 21063 / JCM 11548 / VA1).